The primary structure comprises 157 residues: Small ribosomal subunit protein uS7 (157 aa).

Belongs to the universal ribosomal protein uS7 family. In terms of assembly, part of the 30S ribosomal subunit. Contacts proteins S9 and S11.

Functionally, one of the primary rRNA binding proteins, it binds directly to 16S rRNA where it nucleates assembly of the head domain of the 30S subunit. Is located at the subunit interface close to the decoding center, probably blocks exit of the E-site tRNA. The polypeptide is Small ribosomal subunit protein uS7 (Desulfotalea psychrophila (strain LSv54 / DSM 12343)).